The sequence spans 444 residues: Guanosine nucleotide diphosphate dissociation inhibitor 2 (444 aa).

Belongs to the Rab GDI family. Expressed in roots and floral buds.

Its function is as follows. Regulates the GDP/GTP exchange reaction of most RAB proteins by inhibiting the dissociation of GDP from them, and the subsequent binding of GTP. The chain is Guanosine nucleotide diphosphate dissociation inhibitor 2 (GDI2) from Arabidopsis thaliana (Mouse-ear cress).